The sequence spans 23 residues: Glutamine synthetase (23 aa).

This sequence belongs to the glutamine synthetase family. Oligomer of 12 subunits arranged in the form of two hexagons. The cofactor is Mg(2+).

The protein resides in the cytoplasm. The catalysed reaction is L-glutamate + NH4(+) + ATP = L-glutamine + ADP + phosphate + H(+). With respect to regulation, the activity of this enzyme could be controlled by adenylation under conditions of abundant glutamine. Involved in nitrogen metabolism via ammonium assimilation. Catalyzes the ATP-dependent biosynthesis of glutamine from glutamate and ammonia. The chain is Glutamine synthetase from Phormidium lapideum.